Consider the following 821-residue polypeptide: MLRLLRHARRHSTSSSSSAAAAAVPLTSPAFAVFGANTGVGKTLVSAGLVASLLASPSPSPSTVAYLKPLQTGFPDDSDARFVFDRAPALLRRLRLAGGGASTRLVASNHTLFPSPAVDPLPERQDTVVNYGGEEGVEEKALVCRTVYAWREPVSPHLAAEREGMPVEDEEVRWLVDRWLAEEDGGGEVWKVLETAGGVASPGPSGTLQCDLYRSSRLPAVLVGDGRLGGISSTLSAYETLLLRGYDVGSVILEDRGLSNDRFLLSYLRKRVPVHVLPPIPEDPKDDLTDWFSESSSAFSSLKDSLQSFHSRRVQRLNSMQRKSKYLLWWPFTQHDLVPVDSVTVIDSRFGENFSAYKVKDKTIVPQFDACASWWTQGPDSNLQIELARDMGYAAARYGHVMFPENVHEPALRCAELLLGGVGKDWASRVYFSDNGSTAIEIALKMAFRKYACDHGIIVDSEKDIRSEGSVHFKVLALNGSYHGDTLGAMEAQAPSAYTSFLQQPWYSGRGLFLDPPTVYIKNKSANLSLPPSIMHDQLSSCDTCFSSLTEVFCKTRDTSSAANVYVSYISQQLSQYAMSNNSEHIAALIIEPVIQGAGGMHLIDPLFQRLLVKECKNRKIPVIFDEVFTGFWRLGVESASELLGCFPDISCYAKLMTGGIVPLAATLATEPIFEAFRSDSKLTALLHGHSYTAHPMGCTAAVKAIQWYKDPSTNSNIDLDRMKLKELWDSALVNHLSSLPNVKRVVSLGTLCAIELKAEGSDAGYASLYASSLIRQLREEDNIYARPLGNVIYLMCGPCTTQDSCTRQLAKVHRRLQKLN.

A dethiobiotin synthetase region spans residues 28-283; the sequence is SPAFAVFGAN…VHVLPPIPED (256 aa). 39 to 44 lines the ATP pocket; it reads GVGKTL. Residue T43 coordinates Mg(2+). T72 provides a ligand contact to substrate. E194 lines the Mg(2+) pocket. Residue 194–197 coordinates ATP; that stretch reads ETAG. Residues 316–820 are 7,8-diamino-pelargonic acid aminotransferase; the sequence is RLNSMQRKSK…AKVHRRLQKL (505 aa). 374–375 contacts (8S)-8-amino-7-oxononanoate; the sequence is WW. 436-437 provides a ligand contact to pyridoxal 5'-phosphate; it reads GS. Position 482 (Y482) interacts with (8S)-8-amino-7-oxononanoate. A pyridoxal 5'-phosphate-binding site is contributed by D626. The (8S)-8-amino-7-oxononanoate site is built by K655 and G689. The residue at position 655 (K655) is an N6-(pyridoxal phosphate)lysine. S691 contacts pyridoxal 5'-phosphate. Position 787 (R787) interacts with (8S)-8-amino-7-oxononanoate.

The protein in the N-terminal section; belongs to the dethiobiotin synthetase family. This sequence in the C-terminal section; belongs to the class-III pyridoxal-phosphate-dependent aminotransferase family. BioA subfamily. The cofactor is Mg(2+). It depends on pyridoxal 5'-phosphate as a cofactor.

The protein localises to the mitochondrion. The enzyme catalyses (7R,8S)-7,8-diammoniononanoate + CO2 + ATP = (4R,5S)-dethiobiotin + ADP + phosphate + 3 H(+). It carries out the reaction (8S)-8-amino-7-oxononanoate + S-adenosyl-L-methionine = S-adenosyl-4-methylsulfanyl-2-oxobutanoate + (7R,8S)-7,8-diammoniononanoate. Its pathway is cofactor biosynthesis; biotin biosynthesis; biotin from 7,8-diaminononanoate: step 1/2. It functions in the pathway cofactor biosynthesis; biotin biosynthesis; 7,8-diaminononanoate from 8-amino-7-oxononanoate (SAM route): step 1/1. In terms of biological role, bifunctional enzyme that catalyzes two different reactions involved in the biotin biosynthesis. Catalyzes a mechanistically unusual reaction, the ATP-dependent insertion of CO2 between the N7 and N8 nitrogen atoms of 7,8-diaminopelargonic acid (DAPA) to form an ureido ring. Functionally, catalyzes the transfer of the alpha-amino group from S-adenosyl-L-methionine (SAM) to 7-keto-8-aminopelargonic acid (KAPA) to form 7,8-diaminopelargonic acid (DAPA). It is the only aminotransferase known to utilize SAM as an amino donor. The protein is Bifunctional dethiobiotin synthetase/7,8-diamino-pelargonic acid aminotransferase, mitochondrial (BIO3-BIO1) of Oryza sativa subsp. japonica (Rice).